Reading from the N-terminus, the 397-residue chain is Bifunctional enzyme IspD/IspF (397 aa).

A 2-C-methyl-D-erythritol 4-phosphate cytidylyltransferase region spans residues 1–236 (MSIAAVILAA…QKKMQMFPDI (236 aa)). The segment at 237–397 (RTGNGYDVHS…NVLYPGEIPK (161 aa)) is 2-C-methyl-D-erythritol 2,4-cyclodiphosphate synthase. Residues aspartate 243 and histidine 245 each coordinate a divalent metal cation. 4-CDP-2-C-methyl-D-erythritol 2-phosphate contacts are provided by residues 243 to 245 (DVH) and 269 to 270 (HS). Histidine 277 contacts a divalent metal cation. Residues 291–293 (DIG), 367–370 (TTNE), phenylalanine 374, and arginine 377 contribute to the 4-CDP-2-C-methyl-D-erythritol 2-phosphate site.

It in the N-terminal section; belongs to the IspD/TarI cytidylyltransferase family. IspD subfamily. In the C-terminal section; belongs to the IspF family. Requires a divalent metal cation as cofactor.

It carries out the reaction 2-C-methyl-D-erythritol 4-phosphate + CTP + H(+) = 4-CDP-2-C-methyl-D-erythritol + diphosphate. It catalyses the reaction 4-CDP-2-C-methyl-D-erythritol 2-phosphate = 2-C-methyl-D-erythritol 2,4-cyclic diphosphate + CMP. The protein operates within isoprenoid biosynthesis; isopentenyl diphosphate biosynthesis via DXP pathway; isopentenyl diphosphate from 1-deoxy-D-xylulose 5-phosphate: step 2/6. It participates in isoprenoid biosynthesis; isopentenyl diphosphate biosynthesis via DXP pathway; isopentenyl diphosphate from 1-deoxy-D-xylulose 5-phosphate: step 4/6. Bifunctional enzyme that catalyzes the formation of 4-diphosphocytidyl-2-C-methyl-D-erythritol from CTP and 2-C-methyl-D-erythritol 4-phosphate (MEP) (IspD), and catalyzes the conversion of 4-diphosphocytidyl-2-C-methyl-D-erythritol 2-phosphate (CDP-ME2P) to 2-C-methyl-D-erythritol 2,4-cyclodiphosphate (ME-CPP) with a corresponding release of cytidine 5-monophosphate (CMP) (IspF). This is Bifunctional enzyme IspD/IspF from Bartonella henselae (strain ATCC 49882 / DSM 28221 / CCUG 30454 / Houston 1) (Rochalimaea henselae).